A 118-amino-acid polypeptide reads, in one-letter code: Large ribosomal subunit protein uL18 (118 aa).

The protein belongs to the universal ribosomal protein uL18 family. In terms of assembly, part of the 50S ribosomal subunit; part of the 5S rRNA/L5/L18/L25 subcomplex. Contacts the 5S and 23S rRNAs.

This is one of the proteins that bind and probably mediate the attachment of the 5S RNA into the large ribosomal subunit, where it forms part of the central protuberance. This is Large ribosomal subunit protein uL18 from Helicobacter pylori (strain P12).